The following is a 36-amino-acid chain: Glucagon-1 (36 aa).

Belongs to the glucagon family.

It localises to the secreted. Functionally, promotes hydrolysis of glycogen and lipids, and raises the blood sugar level. In Oreochromis niloticus (Nile tilapia), this protein is Glucagon-1 (gcg1).